A 363-amino-acid polypeptide reads, in one-letter code: GTPase Obg (363 aa).

In terms of domain architecture, Obg spans 1–159 (MKFIDEAKIY…LELRLELRVL (159 aa)). Residues 160–338 (ADVGLLGLPN…LIYAISEALE (179 aa)) form the OBG-type G domain. GTP is bound by residues 166–173 (GLPNAGKS), 191–195 (FTTLH), 213–216 (DVPG), 284–287 (NKLD), and 319–321 (AAI). Serine 173 and threonine 193 together coordinate Mg(2+). Positions 342-363 (RPEIGDLDDNDEDSDEIIRDTE) are disordered. Residues 346–356 (GDLDDNDEDSD) show a composition bias toward acidic residues.

Belongs to the TRAFAC class OBG-HflX-like GTPase superfamily. OBG GTPase family. Monomer. Mg(2+) serves as cofactor.

The protein resides in the cytoplasm. In terms of biological role, an essential GTPase which binds GTP, GDP and possibly (p)ppGpp with moderate affinity, with high nucleotide exchange rates and a fairly low GTP hydrolysis rate. Plays a role in control of the cell cycle, stress response, ribosome biogenesis and in those bacteria that undergo differentiation, in morphogenesis control. The polypeptide is GTPase Obg (Dechloromonas aromatica (strain RCB)).